The primary structure comprises 55 residues: Large ribosomal subunit protein bL33A (55 aa).

Belongs to the bacterial ribosomal protein bL33 family.

This Mycobacterium sp. (strain JLS) protein is Large ribosomal subunit protein bL33A.